A 1700-amino-acid chain; its full sequence is MTSNSPIGLEGSDLSSINTMMSAVMSVASVTENGGSPQGIKSPMKPPGPNRIGRRNQETKEEKSSYNCPLCEKICTTQHQLTMHIRQHNTDTGGADHACSICGKSLSSASSLDRHMLVHSGERPYKCTVCGQSFTTNGNMHRHMKIHEKDTNSTTAAAPPSPLKRRRLSSKRKLSHDAESEDPGPAKKMVEDGQSGDLDKMSDEIFHCPVCFKEFVCKYELETHMETHSDNPLRCDICCVTFRTHRGLLRHNALVHKQLPRDAMGRPFIQNNPSIPAGFHDLGFTDFSCRKFPRISQAWCETNLRRCISEQHRFVCDTCDKAFPMLSSLILHRQSHIPADQGREKLQTKTLAAESLEQKAFLALLGLQHTKDVKPAPAEELLPDDNQAIQLQTLKYQLPQEPGCPTVLSVSPLDAASLGGSLTVLPATKENMKHLSLQPFQKGFIIQPDSSIVVKPISGESAIELADIQQILKMAASAPPQISLPPLSKAPATPLQAIFKHMPPLKPKPLVTPRTVVAASTPPPLINAQQASPGCISPSLPPQSLKFLKGSVEAVSNVHLLQSKSGIQPSTTTQLFLQQAGVELPGQPEMKTQLEQESIIEALLPLNMEAKIKQEITEGDLKAIMTGPSGKKTPAMRKVLYPCRFCNQVFAFSGVLRAHVRSHLGISPYQCNICDYIAADKAALIRHIRTHSGERPYICKICHYPFTVKANCERHLRKKHLKATRKDIEKNIEYVSSPTAELVDAFCAPETVCRLCGEDLKHYRALRIHMRTHCSRGLGGCHKGRKPFECKECNAPFVAKRNCIHHILKQHLHVPEKDIESYVLATNSGLGPADTPTDAASRGEEGSCVTFAECKPLATFLEPQNGFLHSSPTQPLPSHISVKLEPASSFAMDFNEPLDFSQKGLALVQVKQENVSSLLTSSSSSALYDCSMEPIDLSIPKSVKKGDKDTVVPSDAKKPEPEAGQAEPLSPRPPPCPTLSVTVEPKGSLETPTGTVVAVTTAAKLEPHTQPLQGSVQLAVPIYSPALVSNTPLLGNSAALLNNPALLRPLRPKPPLLLPKPSMTEELPPLASIAQIISSVSSAPTLLKTKVADPGPSITSSNTVATDSPGSSIPKAAATPTDTTSSKESSEPPPAASSPEEALPTEQGPAATSSSRKRGRKRGLRNRPLPNSSAVDLDSSGEFASIEKMLATTDTNKFSPFLQTAEDDTQEEVAGAPADQHGPADEEQGSPAEDRLLRAKRNSYANCLQKINCPHCPRVFPWASSLQRHMLTHTDSQSDTDTLTTPGEVLDLTAQAKEQPPAEGASEISPASQDLAIKEAKAAAAPSEEEEEKETEENPEPEEECRVEESTGAADAPEEDTASNQSLDLDFATKLMDFKLAESEAGSVDSQGPAQQEPKHACDTCGKNFKFLGTLSRHKKAHSCQEPKEEEAAAPSLENEGVGRAVEGPSPSPEPEEKPAESLAIDPTPGTREASVAKQNEETEGPTDGEGTAEKRGDGDKRPKTDSPKSMASKADKRKKVCSVCNKRFWSLQDLTRHMRSHTGERPYKCQTCERTFTLKHSLVRHQRIHQKARHSKHHGKDSDKDERAEEDSEDESTHSATNPASENEAESAPSTSNHVAVTRSRKESLSTSGKECSPEERAAAEQAAEPSAPKEQASPGETDPQSPAAIVQDLLELCGKRPAPILAATDGASQLLGME.

Residues 31 to 63 (TENGGSPQGIKSPMKPPGPNRIGRRNQETKEEK) are disordered. Phosphoserine occurs at positions 36 and 42. 3 C2H2-type zinc fingers span residues 66–88 (YNCP…IRQH), 97–119 (HACS…MLVH), and 125–147 (YKCT…MKIH). The interval 146-195 (IHEKDTNSTTAAAPPSPLKRRRLSSKRKLSHDAESEDPGPAKKMVEDGQS) is disordered. Position 161 is a phosphoserine (serine 161). A compositionally biased stretch (basic residues) spans 163 to 174 (LKRRRLSSKRKL). Phosphoserine occurs at positions 175 and 180. The span at 184-195 (GPAKKMVEDGQS) shows a compositional bias: basic and acidic residues. The C2H2-type 4 zinc finger occupies 206-228 (FHCPVCFKEFVCKYELETHMETH). Residue serine 229 is modified to Phosphoserine. 2 consecutive C2H2-type zinc fingers follow at residues 233 to 256 (LRCD…ALVH) and 314 to 336 (FVCD…RQSH). Glycyl lysine isopeptide (Lys-Gly) (interchain with G-Cter in SUMO2) cross-links involve residues lysine 433, lysine 500, lysine 549, lysine 564, lysine 591, and lysine 611. Lysine 613 participates in a covalent cross-link: Glycyl lysine isopeptide (Lys-Gly) (interchain with G-Cter in SUMO1); alternate. Residue lysine 613 forms a Glycyl lysine isopeptide (Lys-Gly) (interchain with G-Cter in SUMO2); alternate linkage. A Glycyl lysine isopeptide (Lys-Gly) (interchain with G-Cter in SUMO2) cross-link involves residue lysine 622. 5 consecutive C2H2-type zinc fingers follow at residues 641–663 (YPCR…VRSH), 669–691 (YQCN…IRTH), 697–720 (YICK…RKKH), 751–782 (TVCR…GGCH), and 788–813 (FECK…QHLH). Glycyl lysine isopeptide (Lys-Gly) (interchain with G-Cter in SUMO2) cross-links involve residues lysine 855, lysine 883, and lysine 911. 2 disordered regions span residues 939 to 991 (IPKS…SLET) and 1092 to 1177 (ADPG…AVDL). Basic and acidic residues predominate over residues 944-961 (KKGDKDTVVPSDAKKPEP). At serine 970 the chain carries Phosphoserine. Polar residues predominate over residues 1097 to 1111 (SITSSNTVATDSPGS). Serine 1125, serine 1137, and serine 1138 each carry phosphoserine. Residues 1137 to 1146 (SSPEEALPTE) show a composition bias toward low complexity. Positions 1155 to 1165 (SRKRGRKRGLR) are enriched in basic residues. 4 positions are modified to phosphoserine: serine 1172, serine 1179, serine 1180, and serine 1230. Disordered regions lie at residues 1195 to 1235 (TNKF…AEDR), 1273 to 1368 (HTDS…QSLD), 1383 to 1521 (SEAG…RKKV), and 1564 to 1670 (VRHQ…SPAA). The C2H2-type 12 zinc finger occupies 1251 to 1273 (INCPHCPRVFPWASSLQRHMLTH). Residues 1273–1285 (HTDSQSDTDTLTT) are compositionally biased toward low complexity. The span at 1327-1346 (SEEEEEKETEENPEPEEECR) shows a compositional bias: acidic residues. The C2H2-type 13 zinc finger occupies 1400–1422 (HACDTCGKNFKFLGTLSRHKKAH). Phosphoserine occurs at positions 1450 and 1452. Positions 1492 to 1507 (TAEKRGDGDKRPKTDS) are enriched in basic and acidic residues. 2 consecutive C2H2-type zinc fingers follow at residues 1520–1542 (KVCS…MRSH) and 1548–1570 (YKCQ…QRIH). Basic residues predominate over residues 1564–1580 (VRHQRIHQKARHSKHHG). Phosphoserine occurs at positions 1593 and 1606. The span at 1645–1660 (AEQAAEPSAPKEQASP) shows a compositional bias: low complexity. Serine 1667 bears the Phosphoserine mark.

This sequence belongs to the krueppel C2H2-type zinc-finger protein family. Interacts with NEUROD1. Interacts with AR. Expressed in splenic B-cells.

It is found in the nucleus speckle. Its function is as follows. Transcription factor that binds specifically to the RAS-responsive elements (RRE) of gene promoters. Represses the angiotensinogen gene. Negatively regulates the transcriptional activity of AR. Potentiates the transcriptional activity of NEUROD1. Binds specifically to the allelic variant of the CDKN2A promoter present in Balb/c mice, which leads to a down-regulation of CDKN2A expression in this strain, and, as a consequence, to an elevated susceptibility to pristane-induced tumors. Promotes brown adipocyte differentiation. May be involved in Ras/Raf-mediated cell differentiation by enhancing calcitonin expression. In Mus musculus (Mouse), this protein is Ras-responsive element-binding protein 1 (Rreb1).